Consider the following 652-residue polypeptide: Carboxypeptidase S1 homolog A (652 aa).

An N-terminal signal peptide occupies residues 1–19 (MRFAASIAVALPVIHAASA). Cysteine 50 and cysteine 121 are disulfide-bonded. Residues asparagine 77, asparagine 132, asparagine 161, asparagine 168, asparagine 184, and asparagine 202 are each glycosylated (N-linked (GlcNAc...) asparagine). Serine 238 is an active-site residue. N-linked (GlcNAc...) asparagine glycans are attached at residues asparagine 260, asparagine 299, asparagine 347, and asparagine 410. Cystine bridges form between cysteine 325/cysteine 361 and cysteine 332/cysteine 354. Residue aspartate 458 is part of the active site. Residue cysteine 461 participates in substrate binding. N-linked (GlcNAc...) asparagine glycosylation is found at asparagine 474, asparagine 492, and asparagine 505. Histidine 516 is a catalytic residue. Position 517 (glutamate 517) interacts with substrate. The tract at residues 608 to 627 (AASKGNPPPTTTSSPTAAPT) is disordered. A compositionally biased stretch (low complexity) spans 618–627 (TTSSPTAAPT). Glycine 629 carries GPI-anchor amidated glycine lipidation. A propeptide spans 630–652 (SAMLKAPVAMLAISALTVLAFFL) (removed in mature form).

Belongs to the peptidase S10 family.

It is found in the cell membrane. The catalysed reaction is Preferential release of a C-terminal arginine or lysine residue.. Its function is as follows. Extracellular serine carboxypeptidase that contributes to pathogenicity. The chain is Carboxypeptidase S1 homolog A (SCPA) from Trichophyton rubrum (Athlete's foot fungus).